A 181-amino-acid polypeptide reads, in one-letter code: MHGSALLCCCLVLLAGVGASRHQSTLLEDDCTHFPASLPHMLRELRAAFGRVKIFFQMKDKLDNILLTGSLLEDFKSYLGCQALSEMIQFYLEEVMPRAENHDPDIKNHVNSLGEKLKTLRLRLRLRRCHRFLPCENKSKAVEQVKSAFSKLQEKGVYKAMSEFDIFINYIETYMTMRMKI.

A signal peptide spans methionine 1–alanine 19. Intrachain disulfides connect cysteine 31–cysteine 129 and cysteine 81–cysteine 135. N-linked (GlcNAc...) asparagine glycosylation occurs at asparagine 137.

It belongs to the IL-10 family. As to quaternary structure, homodimer. Interacts with IL10RA and IL10RB.

The protein localises to the secreted. In terms of biological role, major immune regulatory cytokine that acts on many cells of the immune system where it has profound anti-inflammatory functions, limiting excessive tissue disruption caused by inflammation. Mechanistically, IL10 binds to its heterotetrameric receptor comprising IL10RA and IL10RB leading to JAK1 and STAT2-mediated phosphorylation of STAT3. In turn, STAT3 translocates to the nucleus where it drives expression of anti-inflammatory mediators. Targets antigen-presenting cells (APCs) such as macrophages and monocytes and inhibits their release of pro-inflammatory cytokines including granulocyte-macrophage colony-stimulating factor /GM-CSF, granulocyte colony-stimulating factor/G-CSF, IL-1 alpha, IL-1 beta, IL-6, IL-8 and TNF-alpha. Also interferes with antigen presentation by reducing the expression of MHC-class II and co-stimulatory molecules, thereby inhibiting their ability to induce T cell activation. In addition, controls the inflammatory response of macrophages by reprogramming essential metabolic pathways including mTOR signaling. The protein is Interleukin-10 (IL10) of Canis lupus familiaris (Dog).